The primary structure comprises 400 residues: Putative cytochrome P450 141 (400 aa).

Transmembrane regions (helical) follow at residues 225-245 (VVGM…AVIT) and 294-314 (VVIA…ITSA). Cys346 provides a ligand contact to heme.

Belongs to the cytochrome P450 family. Heme serves as cofactor.

The protein resides in the cell membrane. The chain is Putative cytochrome P450 141 (cyp141) from Mycobacterium tuberculosis (strain CDC 1551 / Oshkosh).